A 287-amino-acid polypeptide reads, in one-letter code: NAD kinase (287 aa).

The Proton acceptor role is filled by Asp-66. NAD(+) is bound by residues 66 to 67 (DG), 137 to 138 (ND), Arg-148, Arg-165, Asp-167, and 178 to 183 (TAYSMS).

This sequence belongs to the NAD kinase family. A divalent metal cation serves as cofactor.

The protein resides in the cytoplasm. The catalysed reaction is NAD(+) + ATP = ADP + NADP(+) + H(+). Functionally, involved in the regulation of the intracellular balance of NAD and NADP, and is a key enzyme in the biosynthesis of NADP. Catalyzes specifically the phosphorylation on 2'-hydroxyl of the adenosine moiety of NAD to yield NADP. The chain is NAD kinase from Chlorobium limicola (strain DSM 245 / NBRC 103803 / 6330).